Consider the following 383-residue polypeptide: Succinyl-diaminopimelate desuccinylase (383 aa).

His-73 provides a ligand contact to Zn(2+). The active site involves Asp-75. Asp-107 contributes to the Zn(2+) binding site. Residue Glu-141 is the Proton acceptor of the active site. The Zn(2+) site is built by Glu-142, Glu-170, and His-356.

The protein belongs to the peptidase M20A family. DapE subfamily. Homodimer. Requires Zn(2+) as cofactor. Co(2+) is required as a cofactor.

It carries out the reaction N-succinyl-(2S,6S)-2,6-diaminopimelate + H2O = (2S,6S)-2,6-diaminopimelate + succinate. It functions in the pathway amino-acid biosynthesis; L-lysine biosynthesis via DAP pathway; LL-2,6-diaminopimelate from (S)-tetrahydrodipicolinate (succinylase route): step 3/3. Functionally, catalyzes the hydrolysis of N-succinyl-L,L-diaminopimelic acid (SDAP), forming succinate and LL-2,6-diaminopimelate (DAP), an intermediate involved in the bacterial biosynthesis of lysine and meso-diaminopimelic acid, an essential component of bacterial cell walls. This is Succinyl-diaminopimelate desuccinylase from Pseudomonas entomophila (strain L48).